We begin with the raw amino-acid sequence, 502 residues long: UDP-N-acetylmuramate--L-alanine ligase (502 aa).

119–125 contributes to the ATP binding site; the sequence is GSHGKST.

Belongs to the MurCDEF family.

It localises to the cytoplasm. The enzyme catalyses UDP-N-acetyl-alpha-D-muramate + L-alanine + ATP = UDP-N-acetyl-alpha-D-muramoyl-L-alanine + ADP + phosphate + H(+). It participates in cell wall biogenesis; peptidoglycan biosynthesis. In terms of biological role, cell wall formation. The chain is UDP-N-acetylmuramate--L-alanine ligase from Frankia casuarinae (strain DSM 45818 / CECT 9043 / HFP020203 / CcI3).